We begin with the raw amino-acid sequence, 78 residues long: Small ribosomal subunit protein bS18 (78 aa).

It belongs to the bacterial ribosomal protein bS18 family. Part of the 30S ribosomal subunit. Forms a tight heterodimer with protein bS6.

Functionally, binds as a heterodimer with protein bS6 to the central domain of the 16S rRNA, where it helps stabilize the platform of the 30S subunit. The chain is Small ribosomal subunit protein bS18 from Frankia casuarinae (strain DSM 45818 / CECT 9043 / HFP020203 / CcI3).